Here is a 59-residue protein sequence, read N- to C-terminus: Photosystem II reaction center protein K (59 aa).

Residues 1–22 (MLNIFSLICLSSALHSSSFFFA) constitute a propeptide that is removed on maturation. A helical membrane pass occupies residues 38–58 (MPVIPVLFFLLALVWQAAVSF).

The protein belongs to the PsbK family. PSII is composed of 1 copy each of membrane proteins PsbA, PsbB, PsbC, PsbD, PsbE, PsbF, PsbH, PsbI, PsbJ, PsbK, PsbL, PsbM, PsbT, PsbX, PsbY, PsbZ, Psb30/Ycf12, at least 3 peripheral proteins of the oxygen-evolving complex and a large number of cofactors. It forms dimeric complexes.

It localises to the plastid. It is found in the chloroplast thylakoid membrane. Functionally, one of the components of the core complex of photosystem II (PSII). PSII is a light-driven water:plastoquinone oxidoreductase that uses light energy to abstract electrons from H(2)O, generating O(2) and a proton gradient subsequently used for ATP formation. It consists of a core antenna complex that captures photons, and an electron transfer chain that converts photonic excitation into a charge separation. The polypeptide is Photosystem II reaction center protein K (Piper cenocladum (Ant piper)).